The following is a 282-amino-acid chain: Ribosomal RNA small subunit methyltransferase A (282 aa).

Residues His-11, Leu-13, Gly-44, Glu-65, Asp-90, and Asn-106 each contribute to the S-adenosyl-L-methionine site.

Belongs to the class I-like SAM-binding methyltransferase superfamily. rRNA adenine N(6)-methyltransferase family. RsmA subfamily.

The protein resides in the cytoplasm. It catalyses the reaction adenosine(1518)/adenosine(1519) in 16S rRNA + 4 S-adenosyl-L-methionine = N(6)-dimethyladenosine(1518)/N(6)-dimethyladenosine(1519) in 16S rRNA + 4 S-adenosyl-L-homocysteine + 4 H(+). Specifically dimethylates two adjacent adenosines (A1518 and A1519) in the loop of a conserved hairpin near the 3'-end of 16S rRNA in the 30S particle. May play a critical role in biogenesis of 30S subunits. The chain is Ribosomal RNA small subunit methyltransferase A from Synechococcus sp. (strain JA-2-3B'a(2-13)) (Cyanobacteria bacterium Yellowstone B-Prime).